Here is a 485-residue protein sequence, read N- to C-terminus: MTNKVRTRFAPSPTGYMHVGNLRTALYAYLIAKHDNGDFILRIEDTDQERLVEGALDVIYNTLKITGLSHDEGPDIGGPVGPYVQSERRNIYIEYAEKLIEKGEAYYCFCSKERLDMLRANSEALKRPFRYDKHCIDLSKEEIDKKIAEGVPYVIRQKNPTTGSTSFHDEIYGDISVDNSELDDMILIKSDGLPTYNFANVVDDHLMGITHVVRGSEYLSSSPKYNRLYEAFGWDVPIYVHCPPIMKDEHHKLSKRNGDASFEDLMAKGYLKEAILNYIALLGWNPGGEKEVFSMEELIEAFNYRNINKAPAVFDTKKLKWMNGEYIRALSLDKFHEMALPYYEEALTRDLDTKKISELLHTRVEVLNEIPEQLDFFNNLLEYSPKMYIHKKMKTTYENSLKSLEEVLPKLEALENWTFENIKEVCMNLVKELEVKNGVVLWPIRTAVSGKQFTPGGAFEIADILGKEETLERIKIGIDKLKALQ.

Residues 11-21 (PSPTGYMHVGN) carry the 'HIGH' region motif. 4 residues coordinate Zn(2+): C108, C110, C135, and D137. The short motif at 252–256 (KLSKR) is the 'KMSKS' region element. K255 is an ATP binding site.

The protein belongs to the class-I aminoacyl-tRNA synthetase family. Glutamate--tRNA ligase type 1 subfamily. As to quaternary structure, monomer. It depends on Zn(2+) as a cofactor.

It localises to the cytoplasm. The enzyme catalyses tRNA(Glu) + L-glutamate + ATP = L-glutamyl-tRNA(Glu) + AMP + diphosphate. Its function is as follows. Catalyzes the attachment of glutamate to tRNA(Glu) in a two-step reaction: glutamate is first activated by ATP to form Glu-AMP and then transferred to the acceptor end of tRNA(Glu). The polypeptide is Glutamate--tRNA ligase (Clostridium botulinum (strain Okra / Type B1)).